A 463-amino-acid chain; its full sequence is MLPVVALIGRTNVGKSTLFNYLTRTRDALVADFPGLTRDRQYGRVQRGERDYFVVDTGGIIEAAEGIDDQAMKQVDHVLDEADVILFLVDVHAGMTAGDELIADRLRRINKPVLLVANKIDGTQALIAGAEFHAFGLGEPLLISAAHGTGVHALLERVEALLPESGETGETEAEGGIRIAVVGRPNVGKSTLVNRILGEERVVVYDQPGTTRDSIYIPFERRGERYTLIDTAGIRRRARVNEGVEKFSVIKSFQAIEKAHVVIYLVDASEGLTDQDANLLGMVLEIGRGLLIGFNKWDGLEPEQREKVKRQIDVKLPFLEFAKKYFISALHGTGVGVLMDAVKPIYQSAMLDLSASRLTQVLQDCLTAHPPPLVRGRRIKLKYAHQGGHNPPVVVIHGNQTEDLPAAYRRYLGNEFRNAFKLQGVPLKLVFKSAENPFQGRRNELTERQIRKRRRMIRHVKKR.

EngA-type G domains are found at residues 3-166 (PVVA…PESG) and 177-350 (IRIA…QSAM). Residues 9 to 16 (GRTNVGKS), 56 to 60 (DTGGI), 118 to 121 (NKID), 183 to 190 (GRPNVGKS), 230 to 234 (DTAGI), and 295 to 298 (NKWD) contribute to the GTP site. Residues 351–435 (LDLSASRLTQ…PLKLVFKSAE (85 aa)) enclose the KH-like domain.

The protein belongs to the TRAFAC class TrmE-Era-EngA-EngB-Septin-like GTPase superfamily. EngA (Der) GTPase family. In terms of assembly, associates with the 50S ribosomal subunit.

Its function is as follows. GTPase that plays an essential role in the late steps of ribosome biogenesis. The polypeptide is GTPase Der (Methylococcus capsulatus (strain ATCC 33009 / NCIMB 11132 / Bath)).